The following is a 488-amino-acid chain: L-arabinose isomerase 2 (488 aa).

Mn(2+) contacts are provided by Glu-306, Glu-331, His-348, and His-447.

Belongs to the arabinose isomerase family. It depends on Mn(2+) as a cofactor.

It carries out the reaction beta-L-arabinopyranose = L-ribulose. It participates in carbohydrate degradation; L-arabinose degradation via L-ribulose; D-xylulose 5-phosphate from L-arabinose (bacterial route): step 1/3. Its function is as follows. Catalyzes the conversion of L-arabinose to L-ribulose. This chain is L-arabinose isomerase 2, found in Clostridium acetobutylicum (strain ATCC 824 / DSM 792 / JCM 1419 / IAM 19013 / LMG 5710 / NBRC 13948 / NRRL B-527 / VKM B-1787 / 2291 / W).